Here is a 430-residue protein sequence, read N- to C-terminus: Transcription factor iws-1 (430 aa).

Low complexity predominate over residues 1–14 (MSDAASPAGSPAAE). The interval 1–153 (MSDAASPAGS…EENLTPDERR (153 aa)) is disordered. Residues 15–33 (PTEHRDEDQVNETHQDDGS) show a composition bias toward basic and acidic residues. Residues 52–63 (VLSEIDENEFGD) show a composition bias toward acidic residues. The span at 95-104 (KEGRRPKKRS) shows a compositional bias: basic residues. Residues 124–137 (VRAEGERRARKEVE) are compositionally biased toward basic and acidic residues. The 78-residue stretch at 244-321 (QSVRYFLEPL…GEWSRLILKR (78 aa)) folds into the TFIIS N-terminal domain. Positions 402–430 (GQAPTDHRPIGHSGHEAFRRMTQKGKGKR) are disordered. Positions 406–420 (TDHRPIGHSGHEAFR) are enriched in basic and acidic residues.

Belongs to the IWS1 family.

It localises to the nucleus. Its function is as follows. Transcription factor involved in RNA polymerase II transcription regulation. May function in both SPT15/TBP post-recruitment and recruitment steps of transcription. The protein is Transcription factor iws-1 (iws-1) of Neurospora crassa (strain ATCC 24698 / 74-OR23-1A / CBS 708.71 / DSM 1257 / FGSC 987).